Consider the following 265-residue polypeptide: Capsule polysaccharide export inner-membrane protein BexB (265 aa).

6 helical membrane-spanning segments follow: residues 37 to 57 (IGFF…VMMW), 64 to 84 (KFST…AMMW), 118 to 138 (LLEV…LVMI), 151 to 171 (LIAW…ICAI), 178 to 198 (FGKI…AFFF), and 235 to 255 (ESIG…LVMV). Residues 37–258 (IGFFWLFVEP…LLGLVMVKNF (222 aa)) enclose the ABC transmembrane type-2 domain.

This sequence belongs to the ABC-2 integral membrane protein family.

The protein localises to the cell inner membrane. Its function is as follows. May form an ATP-driven capsule polysaccharide export apparatus, in association with the BexA, BexC and BexD proteins. The protein is Capsule polysaccharide export inner-membrane protein BexB (bexB) of Haemophilus influenzae.